Here is a 124-residue protein sequence, read N- to C-terminus: Small ribosomal subunit protein uS12 (124 aa).

The tract at residues 1–27 (MPTINQLIRKPRKSQTEKTASPALQNC) is disordered. Positions 17–27 (EKTASPALQNC) are enriched in polar residues. Asp-89 bears the 3-methylthioaspartic acid mark.

This sequence belongs to the universal ribosomal protein uS12 family. In terms of assembly, part of the 30S ribosomal subunit. Contacts proteins S8 and S17. May interact with IF1 in the 30S initiation complex.

In terms of biological role, with S4 and S5 plays an important role in translational accuracy. Functionally, interacts with and stabilizes bases of the 16S rRNA that are involved in tRNA selection in the A site and with the mRNA backbone. Located at the interface of the 30S and 50S subunits, it traverses the body of the 30S subunit contacting proteins on the other side and probably holding the rRNA structure together. The combined cluster of proteins S8, S12 and S17 appears to hold together the shoulder and platform of the 30S subunit. The polypeptide is Small ribosomal subunit protein uS12 (Borreliella afzelii (strain PKo) (Borrelia afzelii)).